Reading from the N-terminus, the 257-residue chain is Dihydroorotate dehydrogenase B (NAD(+)), electron transfer subunit (257 aa).

One can recognise an FAD-binding FR-type domain in the interval 2–102; sequence IGRERMTVVS…LGPLGHGFPL (101 aa). FAD contacts are provided by residues 53–56, 70–72, and 77–78; these read RPLS, IYR, and GT. Residues Cys221, Cys226, Cys229, and Cys244 each contribute to the [2Fe-2S] cluster site.

This sequence belongs to the PyrK family. As to quaternary structure, heterotetramer of 2 PyrK and 2 PyrD type B subunits. Requires [2Fe-2S] cluster as cofactor. FAD serves as cofactor.

The protein operates within pyrimidine metabolism; UMP biosynthesis via de novo pathway; orotate from (S)-dihydroorotate (NAD(+) route): step 1/1. Responsible for channeling the electrons from the oxidation of dihydroorotate from the FMN redox center in the PyrD type B subunit to the ultimate electron acceptor NAD(+). This Geobacillus thermodenitrificans (strain NG80-2) protein is Dihydroorotate dehydrogenase B (NAD(+)), electron transfer subunit.